Reading from the N-terminus, the 23-residue chain is NLLQFENMIRNVAGRSGIWWYSD.

Ca(2+) is required as a cofactor. Contains 7 disulfide bonds. Expressed by the venom gland.

It localises to the secreted. It catalyses the reaction a 1,2-diacyl-sn-glycero-3-phosphocholine + H2O = a 1-acyl-sn-glycero-3-phosphocholine + a fatty acid + H(+). Exhibits moderate hydrolytic activities and prefers the anionic micelles (dPPC with deoxycholate) to the zwitterionic micelles (dPPC with Triton X-100). PLA2 catalyzes the calcium-dependent hydrolysis of the 2-acyl groups in 3-sn-phosphoglycerides. The sequence is that of Acidic phospholipase A2 Ts-A2 from Trimeresurus stejnegeri (Chinese green tree viper).